The chain runs to 364 residues: UDP-N-acetylglucosamine--N-acetylmuramyl-(pentapeptide) pyrophosphoryl-undecaprenol N-acetylglucosamine transferase (364 aa).

UDP-N-acetyl-alpha-D-glucosamine-binding positions include 12–14 (TGG), N124, R167, S195, I249, 268–273 (ALTVSE), and Q294.

It belongs to the glycosyltransferase 28 family. MurG subfamily.

Its subcellular location is the cell inner membrane. The enzyme catalyses di-trans,octa-cis-undecaprenyl diphospho-N-acetyl-alpha-D-muramoyl-L-alanyl-D-glutamyl-meso-2,6-diaminopimeloyl-D-alanyl-D-alanine + UDP-N-acetyl-alpha-D-glucosamine = di-trans,octa-cis-undecaprenyl diphospho-[N-acetyl-alpha-D-glucosaminyl-(1-&gt;4)]-N-acetyl-alpha-D-muramoyl-L-alanyl-D-glutamyl-meso-2,6-diaminopimeloyl-D-alanyl-D-alanine + UDP + H(+). It functions in the pathway cell wall biogenesis; peptidoglycan biosynthesis. Its function is as follows. Cell wall formation. Catalyzes the transfer of a GlcNAc subunit on undecaprenyl-pyrophosphoryl-MurNAc-pentapeptide (lipid intermediate I) to form undecaprenyl-pyrophosphoryl-MurNAc-(pentapeptide)GlcNAc (lipid intermediate II). This is UDP-N-acetylglucosamine--N-acetylmuramyl-(pentapeptide) pyrophosphoryl-undecaprenol N-acetylglucosamine transferase from Alteromonas mediterranea (strain DSM 17117 / CIP 110805 / LMG 28347 / Deep ecotype).